A 763-amino-acid chain; its full sequence is Translation initiation factor IF-2, chloroplastic (763 aa).

Disordered stretches follow at residues 1–22, 52–122, and 149–168; these read MFLN…NNSS, IDKS…SNSA, and NNKI…DQSI. Residues 13 to 22 are compositionally biased toward low complexity; it reads SSYSTNNNSS. Over residues 73–92 the composition is skewed to basic and acidic residues; that stretch reads RIDKKNKNFNKAHDLLDNKK. A compositionally biased stretch (basic residues) spans 93–104; it reads NKNRQRKKIKNK. Polar residues predominate over residues 151–168; that stretch reads KIPQQKKQQVASSIDQSI. Positions 261–429 constitute a tr-type G domain; the sequence is NRPPVVTILG…ILLLAELENL (169 aa). GTP contacts are provided by residues 270 to 277, 316 to 320, and 370 to 373; these read GHVDHGKT, DTPGH, and SKID.

This sequence belongs to the TRAFAC class translation factor GTPase superfamily. Classic translation factor GTPase family. IF-2 subfamily.

The protein resides in the plastid. Its subcellular location is the chloroplast. One of the essential components for the initiation of protein synthesis. Protects formylmethionyl-tRNA from spontaneous hydrolysis and promotes its binding to the 30S ribosomal subunits. Also involved in the hydrolysis of GTP during the formation of the 70S ribosomal complex. The polypeptide is Translation initiation factor IF-2, chloroplastic (infB) (Porphyra purpurea (Red seaweed)).